A 90-amino-acid polypeptide reads, in one-letter code: Small ribosomal subunit protein bS16 (90 aa).

This sequence belongs to the bacterial ribosomal protein bS16 family.

The polypeptide is Small ribosomal subunit protein bS16 (Streptococcus agalactiae serotype III (strain NEM316)).